A 488-amino-acid chain; its full sequence is Prostaglandin E2 receptor EP4 subtype (488 aa).

The Extracellular segment spans residues 1–19; that stretch reads MSTPGVNSSASLSPDRLNS. N-linked (GlcNAc...) asparagine glycosylation is present at Asn-7. The chain crosses the membrane as a helical span at residues 20-43; sequence PVTIPAVMFIFGVVGNLVAIVVLC. Residues 44–55 lie on the Cytoplasmic side of the membrane; sequence KSRKEQKETTFY. The helical transmembrane segment at 56–79 threads the bilayer; the sequence is TLVCGLAVTDLLGTLLVSPVTIAT. Topologically, residues 80-96 are extracellular; the sequence is YMKGQWPGGQPLCEYST. Cysteines 92 and 170 form a disulfide. A helical transmembrane segment spans residues 97–115; the sequence is FILLFFSLSGLSIICAMSV. The Cytoplasmic segment spans residues 116 to 135; the sequence is ERYLAINHAYFYSHYVDKRL. Residues 136 to 160 form a helical membrane-spanning segment; sequence AGLTLFAVYASNVLFCALPNMGLGS. Residues 161–184 are Extracellular-facing; that stretch reads SRLQYPDTWCFIDWTTNVTAHAAY. A helical transmembrane segment spans residues 185–211; sequence SYMYAGFSSFLILATVLCNVLVCGALL. The Cytoplasmic portion of the chain corresponds to 212-267; sequence RMHRQFMRRTSLGTEQHHAAAAASVASRGHPAASPALPRLSDFRRRRSFRRIAGAE. A helical membrane pass occupies residues 268–295; sequence IQMVILLIATSLVVLICSIPLVVRVFVN. The Extracellular segment spans residues 296-312; that stretch reads QLYQPSLEREVSKNPDL. A helical membrane pass occupies residues 313-332; it reads QAIRIASVNPILDPWIYILL. Residues 333-488 lie on the Cytoplasmic side of the membrane; sequence RKTVLSKAIE…ETLNLSEKCI (156 aa). The segment at 356–376 is disordered; it reads RERSGQHCSDSQRTSSAMSGH. Over residues 361–376 the composition is skewed to polar residues; the sequence is QHCSDSQRTSSAMSGH. Residues Ser-374, Ser-377, Ser-379, and Ser-382 each carry the phosphoserine modification. A compositionally biased stretch (polar residues) spans 437–449; sequence SETSDSSQGQDSE. A disordered region spans residues 437-475; that stretch reads SETSDSSQGQDSESVLLVDEAGGSGRAGPAPKGSSLQVT.

It belongs to the G-protein coupled receptor 1 family. In terms of assembly, interacts with FEM1A. Phosphorylation mediates agonist-mediated desensitization by promoting cytoplasmic retention. As to expression, high in intestine and in peripheral blood mononuclear cells; low in lung, kidney, thymus, uterus, vasculature and brain. Not found in liver, heart, retina oe skeletal muscle.

It is found in the cell membrane. In terms of biological role, receptor for prostaglandin E2 (PGE2). The activity of this receptor is mediated by G(s) proteins that stimulate adenylate cyclase. Has a relaxing effect on smooth muscle. May play an important role in regulating renal hemodynamics, intestinal epithelial transport, adrenal aldosterone secretion, and uterine function. The chain is Prostaglandin E2 receptor EP4 subtype (PTGER4) from Homo sapiens (Human).